The following is an 827-amino-acid chain: 6-phosphofructo-2-kinase 1 (827 aa).

Disordered regions lie at residues 1-97 (MFKP…ENSA) and 149-175 (TRHH…DGLI). Positions 31-41 (SQDSSYDLLSR) are enriched in low complexity. Over residues 42 to 59 (SSDDKIDAEKGPHDELSK) the composition is skewed to basic and acidic residues. The segment covering 72-97 (TPISSNWNSPGITEENTPSDSPENSA) has biased composition (polar residues). Phosphoserine is present on Ser-92. Thr-157 is modified (phosphothreonine). 190–197 (GLPATGKS) provides a ligand contact to ATP. Active-site residues include Asp-277 and Cys-309. Arg-343 is a beta-D-fructose 6-phosphate binding site. Ser-404 serves as the catalytic Phosphoserine intermediate. The active site involves Glu-497. His-565 serves as the catalytic Proton donor. Phosphoserine is present on residues Ser-644, Ser-652, Ser-659, and Ser-667. Disordered stretches follow at residues 649-704 (APPS…SNFN) and 799-827 (HGKD…QSHV). Residues 671–682 (SASSSQSELSEQ) are compositionally biased toward low complexity. Residues 683-704 (PKNSVSAQTGSNNTTLIGSNFN) show a composition bias toward polar residues.

The catalysed reaction is beta-D-fructose 6-phosphate + ATP = beta-D-fructose 2,6-bisphosphate + ADP + H(+). Its activity is regulated as follows. Phosphorylation results in the activation of the kinase activity. Synthesis of fructose 2,6-bisphosphate. The chain is 6-phosphofructo-2-kinase 1 (PFK26) from Saccharomyces cerevisiae (strain ATCC 204508 / S288c) (Baker's yeast).